A 347-amino-acid chain; its full sequence is Ribosomal RNA small subunit methyltransferase H (347 aa).

S-adenosyl-L-methionine contacts are provided by residues 47-49 (GGY), D64, F91, D114, and Q121. The tract at residues 291 to 347 (PAVKGAVGPTAEEEERNPRARSAKLRAGIRTENPPLEDDLSLFGLPKLPETNELARS) is disordered.

Belongs to the methyltransferase superfamily. RsmH family.

The protein resides in the cytoplasm. It catalyses the reaction cytidine(1402) in 16S rRNA + S-adenosyl-L-methionine = N(4)-methylcytidine(1402) in 16S rRNA + S-adenosyl-L-homocysteine + H(+). In terms of biological role, specifically methylates the N4 position of cytidine in position 1402 (C1402) of 16S rRNA. This chain is Ribosomal RNA small subunit methyltransferase H, found in Brucella anthropi (strain ATCC 49188 / DSM 6882 / CCUG 24695 / JCM 21032 / LMG 3331 / NBRC 15819 / NCTC 12168 / Alc 37) (Ochrobactrum anthropi).